Here is a 299-residue protein sequence, read N- to C-terminus: uncharacterized protein (299 aa).

The chain crosses the membrane as a helical span at residues 25–45; the sequence is LLYFFKSLAMILFFIFFSLTS.

The protein localises to the membrane. This is an uncharacterized protein from Rickettsia prowazekii (strain Madrid E).